Reading from the N-terminus, the 217-residue chain is Protein GrpE (217 aa).

A compositionally biased stretch (basic and acidic residues) spans 1 to 10 (MSDHAEHAAD). The disordered stretch occupies residues 1-39 (MSDHAEHAADAADTDAPEGDDAGGDDGEQAGDDGTSALS). Positions 12–31 (ADTDAPEGDDAGGDDGEQAG) are enriched in acidic residues.

This sequence belongs to the GrpE family. As to quaternary structure, homodimer.

Its subcellular location is the cytoplasm. Its function is as follows. Participates actively in the response to hyperosmotic and heat shock by preventing the aggregation of stress-denatured proteins, in association with DnaK and GrpE. It is the nucleotide exchange factor for DnaK and may function as a thermosensor. Unfolded proteins bind initially to DnaJ; upon interaction with the DnaJ-bound protein, DnaK hydrolyzes its bound ATP, resulting in the formation of a stable complex. GrpE releases ADP from DnaK; ATP binding to DnaK triggers the release of the substrate protein, thus completing the reaction cycle. Several rounds of ATP-dependent interactions between DnaJ, DnaK and GrpE are required for fully efficient folding. The protein is Protein GrpE of Halobacterium salinarum (strain ATCC 29341 / DSM 671 / R1).